The chain runs to 534 residues: Peptide chain release factor 3 (534 aa).

Positions Ala9–Gln278 constitute a tr-type G domain. Residues Ser18–Thr25, Asp86–His90, and Asn140–Asp143 each bind GTP.

This sequence belongs to the TRAFAC class translation factor GTPase superfamily. Classic translation factor GTPase family. PrfC subfamily.

Its subcellular location is the cytoplasm. Increases the formation of ribosomal termination complexes and stimulates activities of RF-1 and RF-2. It binds guanine nucleotides and has strong preference for UGA stop codons. It may interact directly with the ribosome. The stimulation of RF-1 and RF-2 is significantly reduced by GTP and GDP, but not by GMP. The protein is Peptide chain release factor 3 of Xanthomonas axonopodis pv. citri (strain 306).